Consider the following 764-residue polypeptide: 5-methyltetrahydropteroyltriglutamate--homocysteine methyltransferase (764 aa).

Residues 16 to 19 (RELK) and lysine 115 contribute to the 5-methyltetrahydropteroyltri-L-glutamate site. Residues 435–437 (IGS) and glutamate 488 each bind L-homocysteine. L-methionine contacts are provided by residues 435–437 (IGS) and glutamate 488. 5-methyltetrahydropteroyltri-L-glutamate is bound by residues 519-520 (RC) and tryptophan 565. An L-homocysteine-binding site is contributed by aspartate 603. Residue aspartate 603 coordinates L-methionine. Residue glutamate 609 participates in 5-methyltetrahydropteroyltri-L-glutamate binding. Zn(2+) is bound by residues histidine 645, cysteine 647, and glutamate 669. The Proton donor role is filled by histidine 698. Zn(2+) is bound at residue cysteine 730.

It belongs to the vitamin-B12 independent methionine synthase family. The cofactor is Zn(2+).

It carries out the reaction 5-methyltetrahydropteroyltri-L-glutamate + L-homocysteine = tetrahydropteroyltri-L-glutamate + L-methionine. It functions in the pathway amino-acid biosynthesis; L-methionine biosynthesis via de novo pathway; L-methionine from L-homocysteine (MetE route): step 1/1. Functionally, catalyzes the transfer of a methyl group from 5-methyltetrahydrofolate to homocysteine resulting in methionine formation. The protein is 5-methyltetrahydropteroyltriglutamate--homocysteine methyltransferase of Burkholderia thailandensis (strain ATCC 700388 / DSM 13276 / CCUG 48851 / CIP 106301 / E264).